We begin with the raw amino-acid sequence, 366 residues long: MQLSSVLLTAAGLLAPVYSSAIISIGRRSEGLDVSLASTGNTKVQVSVTNTGSSEISILRANTLFDASPTKKFTVYKEGSRKEVPFKGVHLRRSPSDLAKDNLQPIGPGQTIDKEFDLAETLNLSESGTYIVSADGVFPIIDPKSFSIASVIPYESNELKIEVDGKQVSGVLSTRAKIHDHLAQRADFNNGNCTDHQKAVIASALKRDSSIAGEASNAALSGDVRVFEQYFRTTDPSIRQQVSDRFHAISNEACSAEGGVVKYQCEDEMDVCRPGTVAYALLGSNVVVNCPIYYSVTAVSQACDAGDQALTVIHELSHIDAVYYPATTDLAYGEDASMALNADMSIRNADSYTFYANAVRQNCNPS.

An N-terminal signal peptide occupies residues 1–19 (MQLSSVLLTAAGLLAPVYS). Positions 23 to 184 (ISIGRRSEGL…RAKIHDHLAQ (162 aa)) are excised as a propeptide. Residues Asn123 and Asn192 are each glycosylated (N-linked (GlcNAc...) asparagine). Cysteines 272 and 290 form a disulfide. His314 is a binding site for Zn(2+). Glu315 is a catalytic residue. His318 is a Zn(2+) binding site.

It belongs to the peptidase M35 family. Requires Zn(2+) as cofactor.

The protein localises to the secreted. The catalysed reaction is Preferential cleavage of bonds with hydrophobic residues in P1'. Also 3-Asn-|-Gln-4 and 8-Gly-|-Ser-9 bonds in insulin B chain.. In terms of biological role, secreted metalloproteinase that allows assimilation of proteinaceous substrates. Shows high activities on basic nuclear substrates such as histone and protamine. The polypeptide is Neutral protease 2 homolog BDBG_02110 (Blastomyces gilchristii (strain SLH14081) (Blastomyces dermatitidis)).